A 1589-amino-acid chain; its full sequence is Paternally-expressed gene 3 protein (1589 aa).

Residues 46 to 128 form the SCAN box domain; sequence HQRFRNLIYV…TLLENYKEMY (83 aa). 3 disordered regions span residues 128-230, 266-306, and 319-349; these read YQPE…ESYQ, DGHS…RRGI, and KFIKDVSRSSKSGRARESSDRSQRFPRMSDD. Acidic residues predominate over residues 129-142; the sequence is QPEDDNNSDVTSDD. 4 stretches are compositionally biased toward basic and acidic residues: residues 143–152, 161–182, 206–225, and 295–306; these read DMTRNRRESS, SGDRDWDRRGRSRDMEPRDRWS, FEMDRDDDRDSRAYESRSQD, and PEAKKSTHRRGI. 3 C2H2-type zinc fingers span residues 454–476, 507–529, and 565–587; these read YVCDECGRSFSVISEFVEHQIMH, FECKDCGETFNKSAALAEHRKIH, and YECRVCKETFLHSSALIEHQKIH. The span at 588–607 shows a compositional bias: basic and acidic residues; it reads FGDDKDNEREHERERERGET. The interval 588 to 610 is disordered; it reads FGDDKDNEREHERERERGETFRP. The C2H2-type 4 zinc finger occupies 627–649; that stretch reads YECKVCGETFLHSSSLKEHQKIH. The segment at 838–930 is disordered; it reads LVASKPPRSH…EFSVPSSNVR (93 aa). Residues 868 to 881 are compositionally biased toward basic and acidic residues; the sequence is LNDKRQKIPARENP. A C2H2-type 5 zinc finger spans residues 969 to 991; that stretch reads YECQECGECFAHSSDLTEHQKIH. Residues 1056 to 1104 are disordered; sequence EKSHGEESQGENTDGEETHSEETHGQETIEDPVIQSSDMEDPQKDDPDD. The span at 1071–1082 shows a compositional bias: basic and acidic residues; the sequence is EETHSEETHGQE. 5 consecutive C2H2-type zinc fingers follow at residues 1107–1129, 1163–1185, 1225–1247, 1282–1304, and 1332–1354; these read YECEDCGLGFVDLTDLTDHQKVH, YECPKCGESFIHSSFLFEHQRIH, IRCLLCGQGFIHSSALNEHMRLH, FECAVCGESFVNPAELADHVTVH, and YECKDCGKSFIHSTVLTKHKELH. A compositionally biased stretch (acidic residues) spans 1396–1416; the sequence is AEPEVEAAEPEVEAAEPEVEA. Residues 1396 to 1496 are disordered; sequence AEPEVEAAEP…GIEDPEEGED (101 aa). 7 repeat units span residues 1398–1404, 1405–1411, 1412–1418, 1419–1423, 1426–1430, 1433–1437, and 1440–1444. Positions 1398–1418 are 3 X 7 AA repeat of P-E-V-E-A-A-E; the sequence is PEVEAAEPEVEAAEPEVEAAE. Positions 1419–1444 are 4 X 5 AA repeat of P-X-G-E-A; the sequence is PNGEAEGPDGEAAEPIGEAGQPNGEA. 2 stretches are compositionally biased toward acidic residues: residues 1450-1467 and 1476-1496; these read DADEPDGAGIEDPEERAE and PEGDADEPDGVGIEDPEEGED. C2H2-type zinc fingers lie at residues 1506–1528 and 1565–1587; these read YDCHECTETFTSSTAFGEHLKTH and FKCDVCGQLFNDRLSLARHQNTH.

It belongs to the krueppel C2H2-type zinc-finger protein family. In terms of assembly, homodimer. Interacts with SIAH1A and SIAH2. Interacts with TRAF2.

It localises to the nucleus. It is found in the cytoplasm. In terms of biological role, induces apoptosis in cooperation with SIAH1A. Acts as a mediator between p53/TP53 and BAX in a neuronal death pathway that is activated by DNA damage. Acts synergistically with TRAF2 and inhibits TNF induced apoptosis through activation of NF-kappa-B. The protein is Paternally-expressed gene 3 protein (PEG3) of Gorilla gorilla gorilla (Western lowland gorilla).